The chain runs to 103 residues: Large ribosomal subunit protein uL23 (103 aa).

Belongs to the universal ribosomal protein uL23 family. Part of the 50S ribosomal subunit. Contacts protein L29, and trigger factor when it is bound to the ribosome.

One of the early assembly proteins it binds 23S rRNA. One of the proteins that surrounds the polypeptide exit tunnel on the outside of the ribosome. Forms the main docking site for trigger factor binding to the ribosome. In Chlorobium phaeobacteroides (strain DSM 266 / SMG 266 / 2430), this protein is Large ribosomal subunit protein uL23.